Reading from the N-terminus, the 60-residue chain is L-amino-acid oxidase (60 aa).

1 to 4 (GPMR) lines the FAD pocket. Substrate is bound at residue Arg-4.

The protein belongs to the flavin monoamine oxidase family. FIG1 subfamily. As to quaternary structure, homodimer; non-covalently linked. FAD serves as cofactor. In terms of processing, contains 2 disulfide bonds. N-glycosylated. As to expression, expressed by the venom gland.

It localises to the secreted. The enzyme catalyses an L-alpha-amino acid + O2 + H2O = a 2-oxocarboxylate + H2O2 + NH4(+). In terms of biological role, catalyzes an oxidative deamination of predominantly hydrophobic and aromatic L-amino acids, thus producing hydrogen peroxide that may contribute to the diverse toxic effects of this enzyme. Exhibits diverse biological activities, such as hemorrhage, hemolysis, edema, apoptosis of vascular endothelial cells or tumor cell lines, antibacterial and antiparasitic activities, as well as regulation of platelet aggregation. Effects of snake L-amino oxidases on platelets are controversial, since they either induce aggregation or inhibit agonist-induced aggregation. These different effects are probably due to different experimental conditions. This chain is L-amino-acid oxidase, found in Bitis gabonica (Gaboon adder).